Reading from the N-terminus, the 2533-residue chain is Highly reducing polyketide synthase azaB (2533 aa).

Positions 7–433 (TAPMAIIGMA…GSNAHAILES (427 aa)) constitute a Ketosynthase family 3 (KS3) domain. Active-site for beta-ketoacyl synthase activity residues include Cys180, His315, and His355. Residues 554–821 (WVFTGQGAQW…VEFESSFRHM (268 aa)) form a malonyl-CoA:ACP transacylase (MAT) domain region. Positions 946–1081 (SDLVGYSQPS…GRISVITTSD (136 aa)) are N-terminal hotdog fold. One can recognise a PKS/mFAS DH domain in the interval 946 to 1254 (SDLVGYSQPS…CQSLGRALDR (309 aa)). Residues 947 to 1251 (DLVGYSQPSI…GLTCQSLGRA (305 aa)) are dehydratase (DH) domain. His978 serves as the catalytic Proton acceptor; for dehydratase activity. The segment at 1097–1254 (YNRRIDPRYM…CQSLGRALDR (158 aa)) is C-terminal hotdog fold. Asp1163 acts as the Proton donor; for dehydratase activity in catalysis. Residues 1419-1554 (TRQVSELVRL…GGKLILMETT (136 aa)) form a methyltransferase (CMet) domain region. The tract at residues 1839–2155 (GLIDTLVFHD…TGQHMGKIII (317 aa)) is enoyl reductase (ER) domain. The segment at 2178 to 2349 (ASYVIVGGLG…AVSLDLGIVR (172 aa)) is ketoreductase (KR) domain. Positions 2455 to 2532 (DAAALICQEL…DLSLRVATKR (78 aa)) constitute a Carrier domain. Ser2492 carries the post-translational modification O-(pantetheine 4'-phosphoryl)serine.

Its pathway is secondary metabolite biosynthesis. Highly reducing polyketide synthase; part of the gene cluster that mediates the biosynthesis of azaphilones, a class of fungal metabolites characterized by a highly oxygenated pyrano-quinone bicyclic core and exhibiting a broad range of bioactivities. In the first step, the non-reducing polyketide synthase azaA forms the hexaketide precursor from successive condensations of five malonyl-CoA units, presumably with a simple acetyl-CoA starter unit. The reactive polyketide chain then undergoes a PT-mediated C2-C7 cyclization to afford the aromatic ring and is eventually released as an aldehyde through the R-domain. The putative ketoreductase azaE is proposed to catalyze the reduction of the terminal ketone resulting in the early culture product FK17-P2a. The monooxygenase azaH was demonstrated to be the only enzyme required to convert FK17-P2a to azanigerone E. AzaH first hydroxylates the benzaldehyde intermediate FK17-P2a at C4, which triggers the formation of the pyran-ring to afford azanigerone E. In parallel, the 2,4-dimethylhexanoyl chain is synthesized by the HR-PKS azaB and is proposed to be transferred to the C4-hydroxyl of azanigerone E by the acyltransferase azaD directly from the ACP domain of azaB. Alternatively, the 2,4-dimethyl-hexanoyl chain may be offloaded from the HR-PKS as a carboxylic acid and converted to an acyl-CoA by azaF. The resulting acyl-CoA molecule could then be taken up as a substrate by AzaD to form azanigerone B. To yield the carboxylic acid substituent in azanigerone A, the hydroxypropyl side chain of azanigerone B would need to undergo a C-C oxidative cleavage catalyzed by cytochrome P450 AzaI. AzaI is proposed to act on a vicinal diol that leads to a C-C bond scission either through an alkoxyradical intermediate or a peroxy complex. In the biosynthesis of azanigerone A, azanigerone B first undergoes hydroxylation at C10, possibly catalyzed by one of the two FAD-dependent monooxygenases encoded in the cluster, azaG or azaL, resulting in the vicinal diol azanigerone C. Oxidative cleavage of azanigerone C by azaI would yield the corresponding aldehyde derivative of azanigerone A. Finally, the dehydrogenase azaJ is proposed to convert the aldehyde functional group into the carboxylic acid, completing the conversion from azanigerone B to azanigerone A. Alternatively, the oxidation of aldehyde to carboxylic acid may be catalyzed by the same P450 enzyme azaI via consecutive oxidation or by endogenous alcohol dehydrogenase. This chain is Highly reducing polyketide synthase azaB, found in Aspergillus niger (strain ATCC 1015 / CBS 113.46 / FGSC A1144 / LSHB Ac4 / NCTC 3858a / NRRL 328 / USDA 3528.7).